Reading from the N-terminus, the 542-residue chain is Probable cysteine proteinase 361L (542 aa).

Catalysis depends on residues C172, H382, and N414. The helical transmembrane segment at 520 to 540 (TNNWYIYALIIIFILIIFFVL) threads the bilayer.

It belongs to the peptidase C1 family.

It localises to the membrane. Probable cysteine protease. This Acheta domesticus (House cricket) protein is Probable cysteine proteinase 361L.